Consider the following 138-residue polypeptide: Large ribosomal subunit protein uL16 (138 aa).

Basic residues predominate over residues methionine 1–glycine 16. The tract at residues methionine 1–glycine 24 is disordered.

Belongs to the universal ribosomal protein uL16 family. Part of the 50S ribosomal subunit.

Its function is as follows. Binds 23S rRNA and is also seen to make contacts with the A and possibly P site tRNAs. The protein is Large ribosomal subunit protein uL16 of Arthrobacter sp. (strain FB24).